The sequence spans 182 residues: Keratin, type II cytoskeletal 60 kDa, component III (182 aa).

The 63-residue stretch at 1-63 (ERGELALKDA…KLLEGEECRL (63 aa)) folds into the IF rod domain. A coil 2 region spans residues 1–63 (ERGELALKDA…KLLEGEECRL (63 aa)). The tail stretch occupies residues 63–182 (LSGEGVGPVN…TSSSRKSFKS (120 aa)). Residues 157–182 (FGSGGGSSSSVKFVSTTSSSRKSFKS) are disordered. A compositionally biased stretch (low complexity) spans 164-182 (SSSVKFVSTTSSSRKSFKS).

Belongs to the intermediate filament family. Heterotetramer of two type I and two type II keratins.

In Bos taurus (Bovine), this protein is Keratin, type II cytoskeletal 60 kDa, component III.